Consider the following 159-residue polypeptide: Phosphopantetheine adenylyltransferase (159 aa).

Substrate is bound at residue Thr-10. ATP-binding positions include 10–11 and His-18; that span reads TF. Positions 42, 74, and 88 each coordinate substrate. ATP is bound by residues 89 to 91, Glu-99, and 124 to 130; these read GLR and WSFISSS.

This sequence belongs to the bacterial CoaD family. As to quaternary structure, homohexamer. Mg(2+) is required as a cofactor.

It localises to the cytoplasm. The catalysed reaction is (R)-4'-phosphopantetheine + ATP + H(+) = 3'-dephospho-CoA + diphosphate. It functions in the pathway cofactor biosynthesis; coenzyme A biosynthesis; CoA from (R)-pantothenate: step 4/5. Functionally, reversibly transfers an adenylyl group from ATP to 4'-phosphopantetheine, yielding dephospho-CoA (dPCoA) and pyrophosphate. The polypeptide is Phosphopantetheine adenylyltransferase (Citrobacter koseri (strain ATCC BAA-895 / CDC 4225-83 / SGSC4696)).